Here is a 442-residue protein sequence, read N- to C-terminus: Elongation factor 1-alpha (442 aa).

Residues 5 to 228 (KTHINIVVIG…DSVTPPERPV (224 aa)) form the tr-type G domain. Residues 14–21 (GHVDSGKS) form a G1 region. Residue 14–21 (GHVDSGKS) coordinates GTP. Positions 70–74 (GITID) are G2. The G3 stretch occupies residues 91–94 (DAPG). Residues 91–95 (DAPGH) and 153–156 (NKMD) contribute to the GTP site. The segment at 153–156 (NKMD) is G4. Residues 192 to 194 (SGF) form a G5 region.

The protein belongs to the TRAFAC class translation factor GTPase superfamily. Classic translation factor GTPase family. EF-Tu/EF-1A subfamily.

The protein localises to the cytoplasm. In terms of biological role, this protein promotes the GTP-dependent binding of aminoacyl-tRNA to the A-site of ribosomes during protein biosynthesis. This Entamoeba histolytica (strain ATCC 30459 / HM-1:IMSS / ABRM) protein is Elongation factor 1-alpha.